Here is a 120-residue protein sequence, read N- to C-terminus: Small ribosomal subunit protein bS16 (120 aa).

A disordered region spans residues 81-120 (GLAKRPTRNNPQKAEPGEKAKERAAKRAEKAAAPAEDAAA). Basic and acidic residues predominate over residues 95-110 (EPGEKAKERAAKRAEK). Positions 111–120 (AAAPAEDAAA) are enriched in low complexity.

It belongs to the bacterial ribosomal protein bS16 family.

The chain is Small ribosomal subunit protein bS16 from Methylorubrum extorquens (strain CM4 / NCIMB 13688) (Methylobacterium extorquens).